Consider the following 222-residue polypeptide: Small ribosomal subunit protein uS3 (222 aa).

Positions 39 to 109 (IRNFVKKKVY…NILINIVEVK (71 aa)) constitute a KH type-2 domain.

The protein belongs to the universal ribosomal protein uS3 family. Part of the 30S ribosomal subunit. Forms a tight complex with proteins S10 and S14.

Its function is as follows. Binds the lower part of the 30S subunit head. Binds mRNA in the 70S ribosome, positioning it for translation. The chain is Small ribosomal subunit protein uS3 from Clostridium tetani (strain Massachusetts / E88).